The sequence spans 520 residues: Gamma aminobutyrate transaminase 3, chloroplastic (520 aa).

The transit peptide at 1–44 (MAKITSLIGSGIVAATNQVGPHVKHIPAVGNLQKQIVSDQIQVR) directs the protein to the chloroplast. 172–173 (GS) serves as a coordination point for pyridoxal 5'-phosphate. Tyr205 is a binding site for substrate. A pyridoxal 5'-phosphate-binding site is contributed by Asp312. Residue Lys341 coordinates substrate. Lys341 bears the N6-(pyridoxal phosphate)lysine mark.

It belongs to the class-III pyridoxal-phosphate-dependent aminotransferase family. As to expression, expressed in leaves, roots, stems, flowers and fruits.

Its subcellular location is the plastid. It localises to the chloroplast. It carries out the reaction 4-aminobutanoate + pyruvate = succinate semialdehyde + L-alanine. The enzyme catalyses 4-aminobutanoate + glyoxylate = succinate semialdehyde + glycine. Functionally, transaminase that degrades gamma-amino butyric acid (GABA) and uses pyruvate or glyoxylate as amino-group acceptor. Cannot use beta-alanine, ornithine, acetylornithine, serine, glycine, asparagine, glutamine, glutamate, valine, leucine, isoleucine, methionine, phenylalanine, histidine, lysine, arginine, aspartate, threonine, tyrosine, tryptophan, proline, or cysteine as amino donors. In Solanum lycopersicum (Tomato), this protein is Gamma aminobutyrate transaminase 3, chloroplastic (GABA-TP3).